We begin with the raw amino-acid sequence, 663 residues long: Translation factor GUF1 homolog, mitochondrial (663 aa).

The 187-residue stretch at 64–250 (EKIRNFSIIA…AVIERIPPPP (187 aa)) folds into the tr-type G domain. Residues 73-80 (AHIDHGKS), 143-147 (DTPGH), and 197-200 (NKID) each bind GTP.

Belongs to the TRAFAC class translation factor GTPase superfamily. Classic translation factor GTPase family. LepA subfamily.

It localises to the mitochondrion inner membrane. It carries out the reaction GTP + H2O = GDP + phosphate + H(+). Functionally, promotes mitochondrial protein synthesis. May act as a fidelity factor of the translation reaction, by catalyzing a one-codon backward translocation of tRNAs on improperly translocated ribosomes. Binds to mitochondrial ribosomes in a GTP-dependent manner. This chain is Translation factor GUF1 homolog, mitochondrial, found in Arabidopsis thaliana (Mouse-ear cress).